The primary structure comprises 235 residues: Ribonuclease PH (235 aa).

Residues R86 and 124 to 126 (GTR) contribute to the phosphate site.

Belongs to the RNase PH family. In terms of assembly, homohexameric ring arranged as a trimer of dimers.

The enzyme catalyses tRNA(n+1) + phosphate = tRNA(n) + a ribonucleoside 5'-diphosphate. Phosphorolytic 3'-5' exoribonuclease that plays an important role in tRNA 3'-end maturation. Removes nucleotide residues following the 3'-CCA terminus of tRNAs; can also add nucleotides to the ends of RNA molecules by using nucleoside diphosphates as substrates, but this may not be physiologically important. Probably plays a role in initiation of 16S rRNA degradation (leading to ribosome degradation) during starvation. This Legionella pneumophila (strain Paris) protein is Ribonuclease PH.